A 215-amino-acid chain; its full sequence is HTH-type transcriptional repressor FabR (215 aa).

The HTH tetR-type domain occupies lysine 10–leucine 70. Residues serine 33–phenylalanine 52 constitute a DNA-binding region (H-T-H motif).

As to quaternary structure, homodimer.

It localises to the cytoplasm. Represses the transcription of fabB, involved in unsaturated fatty acid (UFA) biosynthesis. By controlling UFA production, FabR directly influences the physical properties of the membrane bilayer. The polypeptide is HTH-type transcriptional repressor FabR (Escherichia coli (strain K12 / MC4100 / BW2952)).